The following is a 650-amino-acid chain: DNA ligase (650 aa).

Residues 30-34 (DEEYD), 79-80 (SL), and Asp-108 contribute to the NAD(+) site. The active-site N6-AMP-lysine intermediate is Lys-110. NAD(+) contacts are provided by Arg-131, Glu-165, and Lys-304. Zn(2+)-binding residues include Cys-398, Cys-401, Cys-414, and Cys-419. A BRCT domain is found at 573 to 650 (PQDSPIAGKS…EEELGEILES (78 aa)).

It belongs to the NAD-dependent DNA ligase family. LigA subfamily. Requires Mg(2+) as cofactor. It depends on Mn(2+) as a cofactor.

It carries out the reaction NAD(+) + (deoxyribonucleotide)n-3'-hydroxyl + 5'-phospho-(deoxyribonucleotide)m = (deoxyribonucleotide)n+m + AMP + beta-nicotinamide D-nucleotide.. In terms of biological role, DNA ligase that catalyzes the formation of phosphodiester linkages between 5'-phosphoryl and 3'-hydroxyl groups in double-stranded DNA using NAD as a coenzyme and as the energy source for the reaction. It is essential for DNA replication and repair of damaged DNA. This Wolinella succinogenes (strain ATCC 29543 / DSM 1740 / CCUG 13145 / JCM 31913 / LMG 7466 / NCTC 11488 / FDC 602W) (Vibrio succinogenes) protein is DNA ligase.